Reading from the N-terminus, the 158-residue chain is Transcription elongation factor GreA (158 aa).

Residues 45–72 (AEYHAAREQQSFIEGRIKQLEGELSHAE) adopt a coiled-coil conformation.

The protein belongs to the GreA/GreB family.

Its function is as follows. Necessary for efficient RNA polymerase transcription elongation past template-encoded arresting sites. The arresting sites in DNA have the property of trapping a certain fraction of elongating RNA polymerases that pass through, resulting in locked ternary complexes. Cleavage of the nascent transcript by cleavage factors such as GreA or GreB allows the resumption of elongation from the new 3'terminus. GreA releases sequences of 2 to 3 nucleotides. This Xylella fastidiosa (strain 9a5c) protein is Transcription elongation factor GreA.